The chain runs to 154 residues: SsrA-binding protein (154 aa).

The disordered stretch occupies residues 134-154 (KRQAIKERQTQREIQRELKER).

Belongs to the SmpB family.

It is found in the cytoplasm. Functionally, required for rescue of stalled ribosomes mediated by trans-translation. Binds to transfer-messenger RNA (tmRNA), required for stable association of tmRNA with ribosomes. tmRNA and SmpB together mimic tRNA shape, replacing the anticodon stem-loop with SmpB. tmRNA is encoded by the ssrA gene; the 2 termini fold to resemble tRNA(Ala) and it encodes a 'tag peptide', a short internal open reading frame. During trans-translation Ala-aminoacylated tmRNA acts like a tRNA, entering the A-site of stalled ribosomes, displacing the stalled mRNA. The ribosome then switches to translate the ORF on the tmRNA; the nascent peptide is terminated with the 'tag peptide' encoded by the tmRNA and targeted for degradation. The ribosome is freed to recommence translation, which seems to be the essential function of trans-translation. This is SsrA-binding protein from Synechococcus sp. (strain JA-2-3B'a(2-13)) (Cyanobacteria bacterium Yellowstone B-Prime).